The primary structure comprises 354 residues: DNA polymerase IV (354 aa).

A UmuC domain is found at 7–188 (IIHVDMDCFF…LPLAKIPGVG (182 aa)). Mg(2+) contacts are provided by Asp-11 and Asp-106. Glu-107 is a catalytic residue.

It belongs to the DNA polymerase type-Y family. Monomer. Mg(2+) is required as a cofactor.

It localises to the cytoplasm. It carries out the reaction DNA(n) + a 2'-deoxyribonucleoside 5'-triphosphate = DNA(n+1) + diphosphate. Its function is as follows. Poorly processive, error-prone DNA polymerase involved in untargeted mutagenesis. Copies undamaged DNA at stalled replication forks, which arise in vivo from mismatched or misaligned primer ends. These misaligned primers can be extended by PolIV. Exhibits no 3'-5' exonuclease (proofreading) activity. May be involved in translesional synthesis, in conjunction with the beta clamp from PolIII. The chain is DNA polymerase IV from Shigella boydii serotype 18 (strain CDC 3083-94 / BS512).